The chain runs to 304 residues: Glycine--tRNA ligase alpha subunit (304 aa).

The protein belongs to the class-II aminoacyl-tRNA synthetase family. In terms of assembly, tetramer of two alpha and two beta subunits.

The protein localises to the cytoplasm. It carries out the reaction tRNA(Gly) + glycine + ATP = glycyl-tRNA(Gly) + AMP + diphosphate. This is Glycine--tRNA ligase alpha subunit from Afipia carboxidovorans (strain ATCC 49405 / DSM 1227 / KCTC 32145 / OM5) (Oligotropha carboxidovorans).